An 86-amino-acid polypeptide reads, in one-letter code: Neuropeptide-like 3 (86 aa).

Residues 1 to 16 (MFKLCVFVALLSLAAA) form the signal peptide. 2 propeptides span residues 17–50 (APAP…VAPQ) and 63–75 (AITQ…LLIK). Position 85 is an isoleucine amide (I85).

The protein localises to the secreted. In Drosophila yakuba (Fruit fly), this protein is Neuropeptide-like 3 (Nplp3).